The chain runs to 101 residues: Phosphoribosyl-AMP cyclohydrolase (101 aa).

Asp-71 is a Mg(2+) binding site. Cys-72 is a Zn(2+) binding site. Mg(2+) is bound by residues Asp-73 and Asp-75. Positions 88 and 95 each coordinate Zn(2+).

Belongs to the PRA-CH family. As to quaternary structure, homodimer. Requires Mg(2+) as cofactor. Zn(2+) serves as cofactor.

The protein resides in the cytoplasm. The enzyme catalyses 1-(5-phospho-beta-D-ribosyl)-5'-AMP + H2O = 1-(5-phospho-beta-D-ribosyl)-5-[(5-phospho-beta-D-ribosylamino)methylideneamino]imidazole-4-carboxamide. Its pathway is amino-acid biosynthesis; L-histidine biosynthesis; L-histidine from 5-phospho-alpha-D-ribose 1-diphosphate: step 3/9. Catalyzes the hydrolysis of the adenine ring of phosphoribosyl-AMP. In Bacillus cereus (strain ZK / E33L), this protein is Phosphoribosyl-AMP cyclohydrolase.